Reading from the N-terminus, the 148-residue chain is Ribosomal RNA large subunit methyltransferase H 2 (148 aa).

S-adenosyl-L-methionine-binding positions include Leu-74, Gly-106, and Phe-125 to Phe-130.

Belongs to the RNA methyltransferase RlmH family. Homodimer.

Its subcellular location is the cytoplasm. It carries out the reaction pseudouridine(1915) in 23S rRNA + S-adenosyl-L-methionine = N(3)-methylpseudouridine(1915) in 23S rRNA + S-adenosyl-L-homocysteine + H(+). Specifically methylates the pseudouridine at position 1915 (m3Psi1915) in 23S rRNA. This is Ribosomal RNA large subunit methyltransferase H 2 from Caldanaerobacter subterraneus subsp. tengcongensis (strain DSM 15242 / JCM 11007 / NBRC 100824 / MB4) (Thermoanaerobacter tengcongensis).